The following is a 170-amino-acid chain: Adenine phosphoribosyltransferase (170 aa).

The protein belongs to the purine/pyrimidine phosphoribosyltransferase family. In terms of assembly, homodimer.

It localises to the cytoplasm. The enzyme catalyses AMP + diphosphate = 5-phospho-alpha-D-ribose 1-diphosphate + adenine. It functions in the pathway purine metabolism; AMP biosynthesis via salvage pathway; AMP from adenine: step 1/1. Catalyzes a salvage reaction resulting in the formation of AMP, that is energically less costly than de novo synthesis. This is Adenine phosphoribosyltransferase from Acaryochloris marina (strain MBIC 11017).